We begin with the raw amino-acid sequence, 748 residues long: Cysteine--tRNA ligase, cytoplasmic (748 aa).

The segment at 1–25 (MAAAPAEQGKGKRVQPPWSPPEGTK) is disordered. Cys-55 contacts Zn(2+). Residue Gly-56 coordinates L-cysteine. A 'HIGH' region motif is present at residues 57–67 (PTVYDASHMGH). Thr-96 lines the L-cysteine pocket. The short motif at 101 to 104 (KIIK) is the 'KIIK' region element. 3 residues coordinate Zn(2+): Cys-348, His-373, and Glu-377. His-373 contributes to the L-cysteine binding site. Residues 406 to 410 (KMSKS) carry the 'KMSKS' region motif. Residue Lys-409 coordinates ATP. Basic and acidic residues-rich tracts occupy residues 656–679 (KIEE…EAAK) and 686–717 (PPHE…KELS). A disordered region spans residues 656 to 719 (KIEEEKKRKK…DTEGKELSKG (64 aa)).

The protein belongs to the class-I aminoacyl-tRNA synthetase family. Homodimer. Requires Zn(2+) as cofactor.

Its subcellular location is the cytoplasm. The enzyme catalyses tRNA(Cys) + L-cysteine + ATP = L-cysteinyl-tRNA(Cys) + AMP + diphosphate. Its function is as follows. Catalyzes the ATP-dependent ligation of cysteine to tRNA(Cys). The polypeptide is Cysteine--tRNA ligase, cytoplasmic (CARS1) (Gallus gallus (Chicken)).